A 161-amino-acid polypeptide reads, in one-letter code: Vitamin K epoxide reductase complex subunit 1 (161 aa).

The Cytoplasmic segment spans residues 1–9 (MGTTWRSPG). The helical transmembrane segment at 10–29 (LVRLALCLAGLALSLYALHV) threads the bilayer. The Lumenal portion of the chain corresponds to 30–80 (KAARARDENYRALCDVGTAISCSRVFSSRWGRGFGLVEHMLGADSVLNQSN). An intrachain disulfide couples Cys43 to Cys51. Asn80 is a binding site for (S)-warfarin. The helical transmembrane segment at 81–95 (SIFGCLFYTLQLLLG) threads the bilayer. At 96-100 (CLRGR) the chain is on the cytoplasmic side. A helical transmembrane segment spans residues 101 to 128 (WASILLVLSSLVSVAGSVYLAWILFFVL). Over 129-131 (YDF) the chain is Lumenal. Cys132 and Cys135 are oxidised to a cystine. The helical transmembrane segment at 132–153 (CIVCITTYAINVGLMLLSFQKV) threads the bilayer. 2 residues coordinate phylloquinone: Cys135 and Tyr139. Tyr139 contacts (S)-warfarin. The Cytoplasmic segment spans residues 154–161 (PEHKTKKH).

It belongs to the VKOR family. In terms of tissue distribution, detected in liver.

The protein resides in the endoplasmic reticulum membrane. It carries out the reaction phylloquinone + [protein]-disulfide + H2O = 2,3-epoxyphylloquinone + [protein]-dithiol. The catalysed reaction is phylloquinol + [protein]-disulfide = phylloquinone + [protein]-dithiol. Inhibited by warfarin (coumadin). Warfarin locks VKORC1 in both redox states into the closed conformation. In terms of biological role, involved in vitamin K metabolism. Catalytic subunit of the vitamin K epoxide reductase (VKOR) complex which reduces inactive vitamin K 2,3-epoxide to active vitamin K. Vitamin K is required for the gamma-carboxylation of various proteins, including clotting factors, and is required for normal blood coagulation, but also for normal bone development. The protein is Vitamin K epoxide reductase complex subunit 1 (Vkorc1) of Mus musculus (Mouse).